Here is an 87-residue protein sequence, read N- to C-terminus: Phosphoribosyl-ATP pyrophosphatase (87 aa).

This sequence belongs to the PRA-PH family.

The protein resides in the cytoplasm. The catalysed reaction is 1-(5-phospho-beta-D-ribosyl)-ATP + H2O = 1-(5-phospho-beta-D-ribosyl)-5'-AMP + diphosphate + H(+). The protein operates within amino-acid biosynthesis; L-histidine biosynthesis; L-histidine from 5-phospho-alpha-D-ribose 1-diphosphate: step 2/9. This chain is Phosphoribosyl-ATP pyrophosphatase, found in Kocuria rhizophila (strain ATCC 9341 / DSM 348 / NBRC 103217 / DC2201).